The chain runs to 89 residues: C-C motif chemokine 18 (89 aa).

The N-terminal stretch at 1 to 20 (MKGLAAALLVLVCTMALCSC) is a signal peptide. 2 disulfides stabilise this stretch: cysteine 30–cysteine 54 and cysteine 31–cysteine 70.

It belongs to the intercrine beta (chemokine CC) family. Post-translationally, the Cys-30/Cys-54 disulfide bond is required for activity. As to expression, expressed at high levels in lung, lymph nodes, placenta, bone marrow, dendritic cells present in germinal centers and T-cell areas of secondary lymphoid organs and macrophages derived from peripheral blood monocytes. Not expressed by peripheral blood monocytes and a monocyte-to-macrophage differentiation is a prerequisite for expression. Expressed in synovial fluids from patients with rheumatoid and septic arthritis and in ovarian carcinoma ascitic fluid.

The protein resides in the secreted. Chemotactic factor that attracts lymphocytes but not monocytes or granulocytes. May be involved in B-cell migration into B-cell follicles in lymph nodes. Attracts naive T-lymphocytes toward dendritic cells and activated macrophages in lymph nodes, has chemotactic activity for naive T-cells, CD4+ and CD8+ T-cells and thus may play a role in both humoral and cell-mediated immunity responses. This is C-C motif chemokine 18 (CCL18) from Homo sapiens (Human).